The chain runs to 79 residues: ATP synthase subunit c (79 aa).

2 helical membrane-spanning segments follow: residues 11–31 (ISAA…IGIL) and 55–75 (IVMG…LYLI).

This sequence belongs to the ATPase C chain family. F-type ATPases have 2 components, F(1) - the catalytic core - and F(0) - the membrane proton channel. F(1) has five subunits: alpha(3), beta(3), gamma(1), delta(1), epsilon(1). F(0) has three main subunits: a(1), b(2) and c(10-14). The alpha and beta chains form an alternating ring which encloses part of the gamma chain. F(1) is attached to F(0) by a central stalk formed by the gamma and epsilon chains, while a peripheral stalk is formed by the delta and b chains.

It localises to the cell membrane. Its function is as follows. F(1)F(0) ATP synthase produces ATP from ADP in the presence of a proton or sodium gradient. F-type ATPases consist of two structural domains, F(1) containing the extramembraneous catalytic core and F(0) containing the membrane proton channel, linked together by a central stalk and a peripheral stalk. During catalysis, ATP synthesis in the catalytic domain of F(1) is coupled via a rotary mechanism of the central stalk subunits to proton translocation. Functionally, key component of the F(0) channel; it plays a direct role in translocation across the membrane. A homomeric c-ring of between 10-14 subunits forms the central stalk rotor element with the F(1) delta and epsilon subunits. This is ATP synthase subunit c from Wigglesworthia glossinidia brevipalpis.